Consider the following 533-residue polypeptide: Tyrosine decarboxylase (533 aa).

Residues 1 to 22 are disordered; sequence MAPPSHCHTINGGAPRNGAIPE. Positions 281 and 336 each coordinate pyridoxal 5'-phosphate. Lys339 is subject to N6-(pyridoxal phosphate)lysine.

The protein belongs to the group II decarboxylase family. Pyridoxal 5'-phosphate is required as a cofactor.

It carries out the reaction L-tyrosine + H(+) = tyramine + CO2. In terms of biological role, catalyzes the decarboxylation of L-tyrosine to tyramine, which can be converted to the hydroxycinnamic acid amides feruloyltyramine and 4-coumaroyltyramine. Possesses low tryptophan decarboxylase activity. The sequence is that of Tyrosine decarboxylase from Oryza sativa subsp. japonica (Rice).